Consider the following 778-residue polypeptide: Ubiquitin thioesterase trabid (778 aa).

2 consecutive RanBP2-type zinc fingers follow at residues 5–36 (KDDAQKWKCETCTYENYPSSLKCTMCQASKPL) and 89–118 (DSEKWPCKVCTYLNWPRSLRCVQCCTKRGG). The segment covering 187 to 197 (ASHNQSQSQHR) has biased composition (polar residues). Residues 187-226 (ASHNQSQSQHRQPVLQQQMQLQLQPQQQRESSSSAAVPPQ) form a disordered region. The segment covering 198-226 (QPVLQQQMQLQLQPQQQRESSSSAAVPPQ) has biased composition (low complexity). The segment at 232-261 (YVSKWACNSCTYENWPRSIKCSMCGKTRER) adopts a RanBP2-type 3 zinc-finger fold. The tract at residues 265-290 (GSQNDLHASSSLNSQEENQQQLQQPN) is disordered. The span at 273-288 (SSSLNSQEENQQQLQQ) shows a compositional bias: low complexity. One can recognise an OTU domain in the interval 507-665 (MFVLWNRSAG…RGHFSALVPM (159 aa)). The active-site Nucleophile is cysteine 518. Histidine 658 serves as the catalytic Proton acceptor. Phosphoserine occurs at positions 770, 771, and 775.

It belongs to the peptidase C64 family. Interacts with Apc.

It catalyses the reaction Thiol-dependent hydrolysis of ester, thioester, amide, peptide and isopeptide bonds formed by the C-terminal Gly of ubiquitin (a 76-residue protein attached to proteins as an intracellular targeting signal).. Positive regulator of the Wnt signaling pathway. Specifically cleaves 'Lys-63'-linked ubiquitin chains. May act by deubiquitinating APC protein, a negative regulator of Wnt-mediated transcription. Required for an efficient wg response, but not for other signaling responses, in the eye. The protein is Ubiquitin thioesterase trabid (trbd) of Drosophila melanogaster (Fruit fly).